Here is a 169-residue protein sequence, read N- to C-terminus: Anaerobic nitrite reductase NSHB3 (169 aa).

The Globin domain occupies 15–165; sequence RFTEEQEALV…LVAAIKQGMK (151 aa). The Homodimerization motif lies at 48-52; that stretch reads EVAPS. Residues Ser58, Lys72, His76, Arg106, Thr110, and His111 each coordinate heme b. Residues 118–130 carry the Homodimerization motif; the sequence is DAHFEVAKFALLE.

The protein belongs to the plant globin family. Homodimer. Requires heme b as cofactor.

Its subcellular location is the cytoplasm. It localises to the nucleus. The enzyme catalyses Fe(III)-heme b-[protein] + nitric oxide + H2O = Fe(II)-heme b-[protein] + nitrite + 2 H(+). Functionally, phytoglobin that reduces nitrite to nitric oxide under anoxic conditions (e.g. during flooding or in waterlogged soil). May not function as an oxygen storage or transport protein. Has an unusually high affinity for O(2) through an hexacoordinate heme iron because of a very low dissociation constant. This is Anaerobic nitrite reductase NSHB3 from Oryza sativa subsp. indica (Rice).